A 72-amino-acid polypeptide reads, in one-letter code: Bowman-Birk type proteinase inhibitor 2a (72 aa).

7 disulfides stabilise this stretch: Cys-8-Cys-61, Cys-9-Cys-24, Cys-12-Cys-57, Cys-14-Cys-22, Cys-31-Cys-38, Cys-35-Cys-50, and Cys-40-Cys-48.

Dimer.

Inhibits trypsin (IC(50)=0.9 nM) and alpha-chymotrypsin (IC(50)=1.1 nM). The chain is Bowman-Birk type proteinase inhibitor 2a from Lathyrus sativus (White vetchling).